The following is a 397-amino-acid chain: Corticosteroid-binding globulin (397 aa).

The signal sequence occupies residues 1 to 22 (MSLALYTCLFWLCTSGLWTTQA). N-linked (GlcNAc...) asparagine glycans are attached at residues Asn-89, Asn-169, Asn-217, and Asn-232. Gln-247 provides a ligand contact to cortisol. Asn-253 is a glycosylation site (N-linked (GlcNAc...) asparagine). Residue Asp-279 coordinates cortisol. Asn-320 carries an N-linked (GlcNAc...) asparagine glycan. Residue Trp-385 coordinates cortisol.

Belongs to the serpin family. Expressed by the liver; secreted in plasma.

The protein resides in the secreted. Functionally, major transport protein for glucocorticoids and progestins in the blood of almost all vertebrate species. This is Corticosteroid-binding globulin (Serpina6) from Mus musculus (Mouse).